The sequence spans 549 residues: MDILRRTTSVELTRLPVSAADTLSDVVFPWQSLCFRLAMVFNNEGGKYDKDGRALMVAVGESNFVLMWRKLFNALCIAPVVVDGSDTQHKLNAESGSLHTSTSSSWCTYDPTRTGTLGKIAGKLFVVTAKCVCEGATLETTAPTSGEVEESGQGKETPIPRRIECVYDFHYTLPDFDIWGNDVTIGFLVMSHYSGNGNVDFVRSLDPTAARVKNLFKSPTVVLGTCHYRAVASRLLRCTSVARQISSTSVMICVNVANVAHVPVRVQEVSFDIYSTQMGEGDNDIGGVQLTHEQRFGPCGTDLKAIKLLQRTVTVTPLLLHGRCLEETLQPGESACFQFAIEVQPHLCHLLETHPRQEPHSRYANNTASVAVEAKNAPYSMRNDVSPILPHSPVAPQTVWRPSPIGTVECVPCSELKQVLFSKFVSQAYVSYNPIVSAGGESTDQRVASPLVSLSGTRCPGPCSRRGWPRSGKRRRGNTCSQLKLSPATCLHILRVCVCVCVCVFAFDGSKGAGQFYCVIGSLFFFRSFSLFLCPLLTVCLLRAKIFNI.

This is Protein X92 from Trypanosoma brucei brucei.